The primary structure comprises 466 residues: Integrin-linked protein kinase homolog pat-4 (466 aa).

ANK repeat units follow at residues 50–79 (HAFSLLHWAAKGGHVAIAEMLLSRGARVNS), 83–112 (GDDTSLHLAAAHGHRQIVVKLLSRKADVNA), and 116–145 (HGMTPLHYACFWGYEQIAEDLISCGAAVNV). In terms of domain architecture, Protein kinase spans 210-465 (LNLITKIAES…QIIPILERMI (256 aa)).

This sequence belongs to the protein kinase superfamily. TKL Ser/Thr protein kinase family. As to quaternary structure, interacts (via protein kinase domain) with unc-112 (via N-terminus). Interacts (via ANK repeats) with unc-97 (via first LIM domain). Interacts (via protein kinase domain) with pat-6 (via C-terminus CH domain). May form a complex with unc-112, unc-97 and pat-6. Does not interact with integrin pat-3. Component of an integrin containing attachment complex, composed of at least pat-2, pat-3, pat-4, pat-6, unc-52, unc-97 and unc-112. In terms of tissue distribution, expressed in body wall muscle.

Its subcellular location is the cytoplasm. The protein localises to the myofibril. The protein resides in the sarcomere. It localises to the m line. It is found in the basal cell membrane. Probable pseudokinase that acts as an adapter protein. Component of an integrin containing attachment complex, which is required for muscle development and maintenance. Involved in the assembly of dense bodies and M lines during body wall muscle development by recruiting several of their components including integrin pat-3, cpna-1, unc-89 and unc-112 to integrin-mediated attachment sites. Plays a role in distal tip cell (DTC) migration and in oocyte development probably by regulating the actin cytoskeleton. During the formation of neuromuscular junctions at the larval stage, negatively regulates membrane protrusion from body wall muscles. May be involved in thermotolerance and lifespan. The sequence is that of Integrin-linked protein kinase homolog pat-4 from Caenorhabditis elegans.